Here is a 221-residue protein sequence, read N- to C-terminus: Small ribosomal subunit protein uS5 (221 aa).

The region spanning 46–109 (IKDEVIDIKR…INAKLNIMEI (64 aa)) is the S5 DRBM domain.

The protein belongs to the universal ribosomal protein uS5 family. Part of the 30S ribosomal subunit. Contacts protein S4.

With S4 and S12 plays an important role in translational accuracy. In Thermoplasma volcanium (strain ATCC 51530 / DSM 4299 / JCM 9571 / NBRC 15438 / GSS1), this protein is Small ribosomal subunit protein uS5.